We begin with the raw amino-acid sequence, 255 residues long: Proteasome subunit alpha type-3 (255 aa).

S2 bears the N-acetylserine mark. N6-acetyllysine occurs at positions 57, 206, and 230. S243 and S250 each carry phosphoserine.

It belongs to the peptidase T1A family. The 26S proteasome consists of a 20S proteasome core and two 19S regulatory subunits. The 20S proteasome core is a barrel-shaped complex made of 28 subunits that are arranged in four stacked rings. The two outer rings are each formed by seven alpha subunits, and the two inner rings are formed by seven beta subunits. The proteolytic activity is exerted by three beta-subunits PSMB5, PSMB6 and PSMB7. Interacts with AURKB. Interacts with CDKN1A. Interacts with MDM2 and RB1. Interacts with the C-terminus of TBXA2R isoform 2. Interacts with DNAJB2. As to quaternary structure, (Microbial infection) Interacts with HIV-1 Tat protein. In terms of assembly, (Microbial infection) Interacts with hepatitis C virus (HCV) F protein. (Microbial infection) Interacts with Epstein-Barr virus EBNA3 proteins.

It is found in the cytoplasm. The protein resides in the nucleus. Component of the 20S core proteasome complex involved in the proteolytic degradation of most intracellular proteins. This complex plays numerous essential roles within the cell by associating with different regulatory particles. Associated with two 19S regulatory particles, forms the 26S proteasome and thus participates in the ATP-dependent degradation of ubiquitinated proteins. The 26S proteasome plays a key role in the maintenance of protein homeostasis by removing misfolded or damaged proteins that could impair cellular functions, and by removing proteins whose functions are no longer required. Associated with the PA200 or PA28, the 20S proteasome mediates ubiquitin-independent protein degradation. This type of proteolysis is required in several pathways including spermatogenesis (20S-PA200 complex) or generation of a subset of MHC class I-presented antigenic peptides (20S-PA28 complex). Binds to the C-terminus of CDKN1A and thereby mediates its degradation. Negatively regulates the membrane trafficking of the cell-surface thromboxane A2 receptor (TBXA2R) isoform 2. This Homo sapiens (Human) protein is Proteasome subunit alpha type-3.